The following is a 291-amino-acid chain: Kidney mitochondrial carrier protein 1 (291 aa).

Residue Ser-2 is modified to N-acetylserine. Solcar repeat units lie at residues Lys-7–Leu-96, Glu-104–His-189, and Asp-198–Leu-289. The next 6 membrane-spanning stretches (helical) occupy residues Phe-9–Ile-26, Gly-71–Thr-89, Leu-106–Ala-124, Gly-164–Tyr-183, Phe-204–Val-224, and Gly-264–Tyr-283.

This sequence belongs to the mitochondrial carrier (TC 2.A.29) family. As to quaternary structure, interacts with VDAC1.

It is found in the mitochondrion inner membrane. The enzyme catalyses sulfite(in) + sulfate(out) = sulfite(out) + sulfate(in). It carries out the reaction thiosulfate(in) + sulfate(out) = thiosulfate(out) + sulfate(in). The catalysed reaction is sulfate(out) + phosphate(in) = sulfate(in) + phosphate(out). It catalyses the reaction oxalate(in) + sulfate(out) = oxalate(out) + sulfate(in). The enzyme catalyses malonate(in) + sulfate(out) = malonate(out) + sulfate(in). It carries out the reaction maleate(in) + sulfate(out) = maleate(out) + sulfate(in). The catalysed reaction is (S)-malate(in) + sulfate(out) = (S)-malate(out) + sulfate(in). It catalyses the reaction (3S)-citramalate(in) + sulfate(out) = (3S)-citramalate(out) + sulfate(in). The enzyme catalyses (3R)-citramalate(in) + sulfate(out) = (3R)-citramalate(out) + sulfate(in). It carries out the reaction sulfate(out) + succinate(in) = sulfate(in) + succinate(out). The catalysed reaction is (S,S)-tartrate(in) + sulfate(out) = (S,S)-tartrate(out) + sulfate(in). It catalyses the reaction (2R,3R)-tartrate(in) + sulfate(out) = (2R,3R)-tartrate(out) + sulfate(in). The enzyme catalyses D-aspartate(in) + sulfate(out) = D-aspartate(out) + sulfate(in). It carries out the reaction L-aspartate(in) + sulfate(out) = L-aspartate(out) + sulfate(in). The catalysed reaction is sulfate(in) = sulfate(out). It catalyses the reaction phosphate(in) = phosphate(out). The enzyme catalyses (S)-malate(out) = (S)-malate(in). Antiporter that transports inorganic anions (sulfate, sulfite, thiosulfate and phosphate) and, to a lesser extent, a variety of dicarboxylates (e.g. malonate, malate and citramalate) and, even more so, aspartate. The sulfate/sulfate exchange is much higher than the phosphate/phosphate and malate/malate exchanges. The transport affinities is higher for sulfate and thiosulfate than for any other substrate. May catalyze the export of sulfite and thiosulfate (the hydrogen sulfide degradation products) from the mitochondria, thereby modulating the level of the hydrogen sulfide. Also may mediate a very low unidirectional transport of sulfate, phosphate and (S)-malate. The sequence is that of Kidney mitochondrial carrier protein 1 from Rattus norvegicus (Rat).